The chain runs to 206 residues: Uridine kinase (206 aa).

11–18 (GGTGSGKS) contributes to the ATP binding site.

It belongs to the uridine kinase family.

Its subcellular location is the cytoplasm. It carries out the reaction uridine + ATP = UMP + ADP + H(+). It catalyses the reaction cytidine + ATP = CMP + ADP + H(+). Its pathway is pyrimidine metabolism; CTP biosynthesis via salvage pathway; CTP from cytidine: step 1/3. The protein operates within pyrimidine metabolism; UMP biosynthesis via salvage pathway; UMP from uridine: step 1/1. This Clostridium botulinum (strain Kyoto / Type A2) protein is Uridine kinase.